Reading from the N-terminus, the 300-residue chain is Inosose dehydratase (300 aa).

This sequence belongs to the IolE/MocC family. Glutathione serves as cofactor. The cofactor is Co(2+). It depends on Mn(2+) as a cofactor.

The enzyme catalyses scyllo-inosose = 3D-3,5/4-trihydroxycyclohexane-1,2-dione + H2O. Its function is as follows. Catalyzes the dehydration of inosose (2-keto-myo-inositol, 2KMI or 2,4,6/3,5-pentahydroxycyclohexanone) to 3D-(3,5/4)-trihydroxycyclohexane-1,2-dione (D-2,3-diketo-4-deoxy-epi-inositol). The chain is Inosose dehydratase from Mesomycoplasma hyopneumoniae (strain J / ATCC 25934 / NCTC 10110) (Mycoplasma hyopneumoniae).